The following is a 198-amino-acid chain: Na(+)-translocating NADH-quinone reductase subunit E (198 aa).

Helical transmembrane passes span 11–31 (SVFI…FLAV), 35–55 (VSTA…SVPV), 77–97 (FLNF…LEMF), 110–130 (GIFL…SFMV), 140–160 (VVYG…LAGL), and 176–196 (LGIT…FSGI).

It belongs to the NqrDE/RnfAE family. In terms of assembly, composed of six subunits; NqrA, NqrB, NqrC, NqrD, NqrE and NqrF.

The protein localises to the cell inner membrane. The enzyme catalyses a ubiquinone + n Na(+)(in) + NADH + H(+) = a ubiquinol + n Na(+)(out) + NAD(+). Its function is as follows. NQR complex catalyzes the reduction of ubiquinone-1 to ubiquinol by two successive reactions, coupled with the transport of Na(+) ions from the cytoplasm to the periplasm. NqrA to NqrE are probably involved in the second step, the conversion of ubisemiquinone to ubiquinol. The sequence is that of Na(+)-translocating NADH-quinone reductase subunit E from Mannheimia succiniciproducens (strain KCTC 0769BP / MBEL55E).